Reading from the N-terminus, the 238-residue chain is U2 small nuclear ribonucleoprotein A' (238 aa).

4 LRR repeats span residues 19–40, 42–63, 64–84, and 89–110; these read KQVT…GITK, TYEV…PRLK, NLKV…DKLP, and HLQS…RILC. Residues 123 to 161 enclose the LRRCT domain; sequence NPITDSPNYRYFIVWLIPTLKVLDFSKVKQKELVKAKEL.

The protein belongs to the U2 small nuclear ribonucleoprotein A family. Associated with the spliceosome.

It is found in the nucleus. Involved in pre-mRNA splicing. The polypeptide is U2 small nuclear ribonucleoprotein A' (LEA1) (Debaryomyces hansenii (strain ATCC 36239 / CBS 767 / BCRC 21394 / JCM 1990 / NBRC 0083 / IGC 2968) (Yeast)).